The chain runs to 688 residues: Envelope glycoprotein gp70 (688 aa).

An N-terminal signal peptide occupies residues 1-98 (MPNHQSGSPT…SVLGPPPVSG (98 aa)). At 99 to 624 (ESYWAYLPKP…ALNPLDWTQY (526 aa)) the chain is on the extracellular side. Residues N127 and N143 are each glycosylated (N-linked (GlcNAc...) asparagine; by host). Residues 426–474 (LLPVDIGDEPWFDDSAIQTFRYATDLIRAKRFVAAIILGISALIAIITS) are a coiled coil. Positions 455 to 456 (KR) are excised as a propeptide. Positions 457-477 (FVAAIILGISALIAIITSFAV) are fusion peptide. The interval 463-481 (LGISALIAIITSFAVATTA) is immunosuppression. N498 carries N-linked (GlcNAc...) asparagine; by host glycosylation. Positions 511 to 541 (LKLEARLNALEEVVLDLGQDVANLKTRMSTR) form a coiled coil. N-linked (GlcNAc...) asparagine; by host glycosylation is present at N557. A helical transmembrane segment spans residues 625–645 (FIFIGVGALLLVIVLMIFPIV). Residues 646–688 (FQCLAKSLDQVQSDLNVLLLKKKKGGNAAPAAEMVELPRVSYT) are Cytoplasmic-facing.

As to quaternary structure, the mature envelope protein (Env) consists of a trimer of SU-TM heterodimers attached by non-covalent interactions or by a labile interchain disulfide bond. Specific enzymatic cleavages in vivo yield mature proteins. Envelope glycoproteins are synthesized as an inactive precursor that is N-glycosylated and processed likely by host cell furin or by a furin-like protease in the Golgi to yield the mature SU and TM proteins. The cleavage site between SU and TM requires the minimal sequence [KR]-X-[KR]-R.

The protein resides in the virion membrane. Its subcellular location is the host cell membrane. Its function is as follows. The surface protein (SU) attaches the virus to the host cell by binding to its receptor. This interaction triggers the refolding of the transmembrane protein (TM) and is thought to activate its fusogenic potential by unmasking its fusion peptide. Fusion occurs at the host cell plasma membrane. In terms of biological role, the transmembrane protein (TM) acts as a class I viral fusion protein. Under the current model, the protein has at least 3 conformational states: pre-fusion native state, pre-hairpin intermediate state, and post-fusion hairpin state. During viral and target cell membrane fusion, the coiled coil regions (heptad repeats) assume a trimer-of-hairpins structure, positioning the fusion peptide in close proximity to the C-terminal region of the ectodomain. The formation of this structure appears to drive apposition and subsequent fusion of viral and target cell membranes. Membranes fusion leads to delivery of the nucleocapsid into the cytoplasm. This Mouse mammary tumor virus (strain C3H) (MMTV) protein is Envelope glycoprotein gp70 (env).